The following is a 732-amino-acid chain: Kell blood group glycoprotein (732 aa).

Residues 1–37 (MEGGDQSEEEPRERSQAGGMGTLWSQESTPEERLPVE) form a disordered region. Topologically, residues 1-47 (MEGGDQSEEEPRERSQAGGMGTLWSQESTPEERLPVEGSRPWAVARR) are cytoplasmic. At S7 the chain carries Phosphoserine. The chain crosses the membrane as a helical; Signal-anchor for type II membrane protein span at residues 48-67 (VLTAILILGLLLCFSVLLFY). The Extracellular portion of the chain corresponds to 68–732 (NFQNCGPRPC…LNPSSRCQLW (665 aa)). The Peptidase M13 domain maps to 76–732 (PCETSVCLDL…LNPSSRCQLW (657 aa)). C77 and C82 are joined by a disulfide. N-linked (GlcNAc...) asparagine glycans are attached at residues N94 and N115. 4 disulfides stabilise this stretch: C100/C717, C108/C682, C155/C410, and C610/C729. Residue N191 is glycosylated (N-linked (GlcNAc...) asparagine; in KEL2 antigen). N-linked (GlcNAc...) asparagine glycosylation occurs at N345. Residue H581 coordinates Zn(2+). The active site involves E582. Zn(2+) is bound at residue H585. N-linked (GlcNAc...) asparagine glycosylation is present at N627. Residue E634 coordinates Zn(2+). D638 (proton donor) is an active-site residue. A disordered region spans residues 684-703 (KPSPQDSHDTHSPPHLRVHG).

This sequence belongs to the peptidase M13 family. In terms of assembly, heterodimer with XK; disulfide-linked. The cofactor is Zn(2+). Post-translationally, N-glycosylated. In terms of tissue distribution, expressed at high levels in erythrocytes and testis (in Sertoli cells), and, at lower levels, in skeletal muscle, tonsils (in follicular dendritic cells), lymph node, spleen and appendix (at protein level). Also expressed in many adult and fetal nonerythroid tissues, including brain, spleen, lymph nodes and bone marrow.

It localises to the cell membrane. Functionally, zinc endopeptidase with endothelin-3-converting enzyme activity. Cleaves EDN1, EDN2 and EDN3, with a marked preference for EDN3. This chain is Kell blood group glycoprotein (KEL), found in Homo sapiens (Human).